Consider the following 51-residue polypeptide: Large ribosomal subunit protein bL33 (51 aa).

A disordered region spans residues 1-23 (MREKIKLESSAGTGHFYTTTKNK). A compositionally biased stretch (polar residues) spans 10–20 (SAGTGHFYTTT).

It belongs to the bacterial ribosomal protein bL33 family.

In Nitrosomonas eutropha (strain DSM 101675 / C91 / Nm57), this protein is Large ribosomal subunit protein bL33.